The sequence spans 180 residues: ADP-ribosylation factor 4 (180 aa).

Gly-2 carries N-myristoyl glycine lipidation. Residues 24–31 (GLDAAGKT), 67–71 (DVGGQ), and 126–129 (NKQD) each bind GTP. Ser-147 is subject to Phosphoserine.

The protein belongs to the small GTPase superfamily. Arf family. In terms of assembly, forms a complex containing RAB11A, ASAP1, RAB3IP, RAP11FIP3 and ARF4; the complex promotes preciliary trafficking; the complex binds to RHO in photoreceptor cells and promotes RHO ciliary transport.

It is found in the golgi apparatus. Its subcellular location is the membrane. Functionally, GTP-binding protein that functions as an allosteric activator of the cholera toxin catalytic subunit, an ADP-ribosyltransferase. Involved in protein trafficking; may modulate vesicle budding and uncoating within the Golgi apparatus. Part of the ciliary targeting complex containing Rab11, ASAP1, Rabin8/RAB3IP, RAB11FIP3 and ARF4, which direct preciliary vesicle trafficking to mother centriole and ciliogenesis initiation. This Mus musculus (Mouse) protein is ADP-ribosylation factor 4 (Arf4).